Reading from the N-terminus, the 124-residue chain is Ubiquitin-related modifier 1 (124 aa).

Positions 34-53 (IPSLVPKDNTTSAKNPPPKD) are disordered. At Gly-124 the chain carries 1-thioglycine. A Glycyl lysine isopeptide (Gly-Lys) (interchain with K-? in acceptor proteins) cross-link involves residue Gly-124.

It belongs to the URM1 family. In terms of processing, C-terminal thiocarboxylation occurs in 2 steps, it is first acyl-adenylated (-COAMP) via the hesA/moeB/thiF part of UBA4, then thiocarboxylated (-COSH) via the rhodanese domain of UBA4.

Its subcellular location is the cytoplasm. It functions in the pathway tRNA modification; 5-methoxycarbonylmethyl-2-thiouridine-tRNA biosynthesis. Its function is as follows. Acts as a sulfur carrier required for 2-thiolation of mcm(5)S(2)U at tRNA wobble positions of cytosolic tRNA(Lys), tRNA(Glu) and tRNA(Gln). Serves as sulfur donor in tRNA 2-thiolation reaction by being thiocarboxylated (-COSH) at its C-terminus by the MOCS3 homolog UBA4. The sulfur is then transferred to tRNA to form 2-thiolation of mcm(5)S(2)U. Prior mcm(5) tRNA modification by the elongator complex is required for 2-thiolation. Also acts as a ubiquitin-like protein (UBL) that is covalently conjugated via an isopeptide bond to lysine residues of target proteins such as AHP1. The thiocarboxylated form serves as substrate for conjugation and oxidative stress specifically induces the formation of UBL-protein conjugates. The chain is Ubiquitin-related modifier 1 from Coprinopsis cinerea (strain Okayama-7 / 130 / ATCC MYA-4618 / FGSC 9003) (Inky cap fungus).